Consider the following 260-residue polypeptide: Glutathione S-transferase domain-containing protein DDB_G0280881 (260 aa).

A GST N-terminal domain is found at 7 to 96; that stretch reads KVDFIFYTNG…YLAQKYNTFL (90 aa). Positions 102 to 228 constitute a GST C-terminal domain; sequence NPKENSDVIT…QQISEGFKNF (127 aa).

This sequence belongs to the GST superfamily.

The polypeptide is Glutathione S-transferase domain-containing protein DDB_G0280881 (Dictyostelium discoideum (Social amoeba)).